We begin with the raw amino-acid sequence, 718 residues long: Methionine--tRNA ligase (718 aa).

A 'HIGH' region motif is present at residues 27 to 37 (PYANGQIHIGH). Residues Cys-158, Cys-161, Cys-171, and Cys-174 each coordinate Zn(2+). The 'KMSKS' region signature appears at 348–352 (KMSKS). Residue Lys-351 participates in ATP binding. The tRNA-binding domain occupies 612–718 (DFAKIDLRIA…SGAKPGMRVK (107 aa)).

Belongs to the class-I aminoacyl-tRNA synthetase family. MetG type 1 subfamily. Homodimer. Requires Zn(2+) as cofactor.

It is found in the cytoplasm. It catalyses the reaction tRNA(Met) + L-methionine + ATP = L-methionyl-tRNA(Met) + AMP + diphosphate. Its function is as follows. Is required not only for elongation of protein synthesis but also for the initiation of all mRNA translation through initiator tRNA(fMet) aminoacylation. This is Methionine--tRNA ligase from Burkholderia cenocepacia (strain ATCC BAA-245 / DSM 16553 / LMG 16656 / NCTC 13227 / J2315 / CF5610) (Burkholderia cepacia (strain J2315)).